The following is a 243-amino-acid chain: Large ribosomal subunit protein uL3 (243 aa).

Disordered regions lie at residues valine 139–glycine 164 and lysine 218–alanine 243. The residue at position 151 (glutamine 151) is an N5-methylglutamine. The segment covering lysine 218–aspartate 229 has biased composition (basic and acidic residues). Residues lysine 230–alanine 243 show a composition bias toward low complexity.

This sequence belongs to the universal ribosomal protein uL3 family. In terms of assembly, part of the 50S ribosomal subunit. Forms a cluster with proteins L14 and L19. Methylated by PrmB.

Functionally, one of the primary rRNA binding proteins, it binds directly near the 3'-end of the 23S rRNA, where it nucleates assembly of the 50S subunit. The chain is Large ribosomal subunit protein uL3 from Afipia carboxidovorans (strain ATCC 49405 / DSM 1227 / KCTC 32145 / OM5) (Oligotropha carboxidovorans).